The primary structure comprises 113 residues: Seminal vesicle secretory protein 4 (113 aa).

A signal peptide spans 1 to 21; the sequence is MNSTSLFLFSLLLLLVTGAIG. The interval 31 to 113 is disordered; the sequence is SEETVRESFS…KSRFSQDALE (83 aa). Composition is skewed to low complexity over residues 38–50 and 83–98; these read SFSMGSRGHMSRS and IISSSSDGSNMEGESS.

It belongs to the SVP2/SVP5/SVP6 family. In terms of tissue distribution, testis.

The protein resides in the secreted. It localises to the extracellular space. The polypeptide is Seminal vesicle secretory protein 4 (Svs4) (Mus musculus (Mouse)).